The following is a 166-amino-acid chain: Chemoreceptor glutamine deamidase CheD (166 aa).

This sequence belongs to the CheD family. Forms a complex with CheC.

The catalysed reaction is L-glutaminyl-[protein] + H2O = L-glutamyl-[protein] + NH4(+). In terms of biological role, deamidates glutamine residues to glutamate on methyl-accepting chemotaxis receptors (MCPs). CheD-mediated MCP deamidation is required for productive communication of the conformational signals of the chemoreceptors to the CheA kinase. The protein is Chemoreceptor glutamine deamidase CheD of Bacillus velezensis (strain DSM 23117 / BGSC 10A6 / LMG 26770 / FZB42) (Bacillus amyloliquefaciens subsp. plantarum).